The primary structure comprises 2609 residues: Mycosubtilin synthase subunit C (2609 aa).

The interval 258–1628 (PREKTIHQLF…RVCAQPEMTV (1371 aa)) is domain 1 (D-serine-activating). The tract at residues 288-695 (TYQELNEKAN…HIPSIQESIV (408 aa)) is adenylation 1. In terms of domain architecture, Carrier 1 spans 771–845 (APRTELEKIL…ELVPYVEPVT (75 aa)). Position 806 is an O-(pantetheine 4'-phosphoryl)serine (S806). Residues 853–1312 (IKGPALLTPI…EISIDELDQF (460 aa)) are epimerization 1. Residues 1322 to 1623 (IENIYPLTPM…NTIPVRVCAQ (302 aa)) are condensation 1. The domain 2 (isoleucine-activating) stretch occupies residues 1778–2359 (PKEKTIYQLF…AHAIQAAALP (582 aa)). The interval 1808 to 2205 (TYRQLNEQAN…LVESVKEAVV (398 aa)) is adenylation 2. The region spanning 2282–2357 (APRTLIEKQL…TMAHAIQAAA (76 aa)) is the Carrier 2 domain. The residue at position 2317 (S2317) is an O-(pantetheine 4'-phosphoryl)serine. The segment at 2375 to 2581 (IPVFCFPPLI…ENMSTIRSIM (207 aa)) is thioesterase.

It belongs to the ATP-dependent AMP-binding enzyme family. Pantetheine 4'-phosphate serves as cofactor.

Its function is as follows. This protein is a multifunctional enzyme, able to activate and polymerize the amino acids Ser and Asn as part of the synthesis of mycosubtilin. The Ser residue is further epimerized to the D-isomer form. The activation sites for these amino acids consist of individual domains. This Bacillus subtilis protein is Mycosubtilin synthase subunit C (mycC).